Here is a 78-residue protein sequence, read N- to C-terminus: Small ribosomal subunit protein uS17 (78 aa).

Belongs to the universal ribosomal protein uS17 family. As to quaternary structure, part of the 30S ribosomal subunit.

Its function is as follows. One of the primary rRNA binding proteins, it binds specifically to the 5'-end of 16S ribosomal RNA. The polypeptide is Small ribosomal subunit protein uS17 (Parvibaculum lavamentivorans (strain DS-1 / DSM 13023 / NCIMB 13966)).